We begin with the raw amino-acid sequence, 144 residues long: Necrosis-inducing secreted protein 1 (144 aa).

Positions 1 to 19 (MQFRASIAAAAGLFALANA) are cleaved as a signal peptide. N-linked (GlcNAc...) asparagine glycosylation is found at N88, N126, and N133. The segment at 103–132 (QYVVAAGLYSLYGASSSPTLSHYNVTVTVG) is BAK1/SERK3-binding.

It belongs to the NIS1 effector family.

Its subcellular location is the secreted. It is found in the host cytoplasm. Its function is as follows. Secreted effector that induces necrotic lesions in Nicotiana benthamiana. Interacts with the host receptor-like kinases (RLKs) BAK1/SERK3 and BKK1/SERK4, inhibits their kinase activity and suppresses INF1-induced pathogen-associated molecular pattern (PAMP)-triggered immunity (PTI) in N.benthamiana. Also interacts with the host receptor-like cytoplasmic kinase (RLCK) BIK1 and inhibits its kinase activity, thereby inhibiting PAMP-induced ROS generation. In PTI, phosphorylation relaying by RLKs and RLCKs is critical for the initiation of downstream signaling. The polypeptide is Necrosis-inducing secreted protein 1 (Colletotrichum higginsianum (strain IMI 349063) (Crucifer anthracnose fungus)).